The sequence spans 554 residues: Heterochromatin protein 1-binding protein 3 (554 aa).

Ala-2 carries the N-acetylalanine modification. The residue at position 6 (Ser-6) is a Phosphoserine. 2 disordered regions span residues 30 to 136 and 142 to 161; these read LGEK…KTIP and SASQ…SPRP. Residue Thr-51 is modified to Phosphothreonine. A compositionally biased stretch (acidic residues) spans 60-71; that stretch reads GEEEKPEPDGSS. Lys-64 is covalently cross-linked (Glycyl lysine isopeptide (Lys-Gly) (interchain with G-Cter in SUMO2)). 2 positions are modified to phosphothreonine: Glu-72 and Thr-85. Residues 72–93 show a composition bias toward polar residues; it reads EESISTVEEQENETPPATSSEA. Over residues 94 to 129 the composition is skewed to basic and acidic residues; the sequence is EQPKGEPESGEKEENNNKSAEEPKKDEKDQSKEKEK. Residue Lys-97 forms a Glycyl lysine isopeptide (Lys-Gly) (interchain with G-Cter in SUMO2) linkage. Polar residues predominate over residues 142–156; that stretch reads SASQLARAQRQTPMA. A phosphoserine mark is found at Ser-144, Ser-157, and Ser-158. The 76-residue stretch at 159–234 folds into the H15 1 domain; the sequence is PRPKMDAILT…GASGSFVVVQ (76 aa). Lys-192 is modified (N6-acetyllysine). The segment at 229 to 254 is disordered; that stretch reads SFVVVQKSKPPQKSKNRKKGSALDPE. Residues 238-248 are compositionally biased toward basic residues; sequence PPQKSKNRKKG. Ser-249 bears the Phosphoserine mark. The PxVxL motif signature appears at 255–259; that stretch reads PQVKL. 2 consecutive H15 domains span residues 255–330 and 337–413; these read PQVK…QLKK and LGGS…QLSF. Lys-258 participates in a covalent cross-link: Glycyl lysine isopeptide (Lys-Gly) (interchain with G-Cter in SUMO2). Residues 420-554 form a disordered region; it reads GVLFPKKESG…AMKKSFKTKK (135 aa). Residues 430–451 are compositionally biased toward acidic residues; that stretch reads GSDDEDEDDDDDESSEDSEDEE. Residues Ser-443, Ser-444, and Ser-447 each carry the phosphoserine modification. Over residues 464-475 the composition is skewed to polar residues; that stretch reads AKSQGKTASMKQ. Basic residues-rich tracts occupy residues 490-511 and 544-554; these read GKVR…RKAR and SAMKKSFKTKK.

In terms of assembly, interacts (via PxVxL motif) with CBX5 (via Trp-174).

The protein localises to the nucleus. The protein resides in the chromosome. Component of heterochromatin that maintains heterochromatin integrity during G1/S progression and regulates the duration of G1 phase to critically influence cell proliferative capacity. May play a role in hypoxia-induced oncogenesis. This Mus musculus (Mouse) protein is Heterochromatin protein 1-binding protein 3 (Hp1bp3).